The sequence spans 287 residues: Heavy metal-associated isoprenylated plant protein 4 (287 aa).

2 consecutive HMA domains span residues 14–80 (IITA…VELI) and 112–176 (IRTT…KHAE). Cys25, Cys28, Cys123, and Cys126 together coordinate a metal cation. Residues 179–235 (SSKTEEEKKKEEEDKKKKEEEDKKKKEDEKKKEEEKKKEEENKKKEGEKKKEEVKVE) adopt a coiled-coil conformation. Residues 181-232 (KTEEEKKKEEEDKKKKEEEDKKKKEDEKKKEEEKKKEEENKKKEGEKKKEEV) form a disordered region. Residue Cys284 is modified to Cysteine methyl ester. Cys284 is lipidated: S-farnesyl cysteine. The propeptide at 285-287 (RIV) is removed in mature form.

It belongs to the HIPP family.

Heavy-metal-binding protein. This Arabidopsis thaliana (Mouse-ear cress) protein is Heavy metal-associated isoprenylated plant protein 4.